The chain runs to 218 residues: MITRAELAAMVDHTLLKPESTAEQVAELAREAGELGTYSICVSPSRLDVELPEGVKLATVCGFPSGAHPSEVKAVEAADSVAQGADEVDMVINLGLAMDGDWDGVREDIEAVRAACPEPTVLKVIIESAALSDEQIVAACQAAEVAGADFVKTSTGFHPAGGASVEAVRLMAQTVGDRLGVKASGGIRTTEAALAMVEAGATRLGLSGTRSVLEGLDS.

The active-site Proton donor/acceptor is aspartate 89. The active-site Schiff-base intermediate with acetaldehyde is lysine 152. The active-site Proton donor/acceptor is the lysine 182.

It belongs to the DeoC/FbaB aldolase family. DeoC type 1 subfamily.

Its subcellular location is the cytoplasm. It catalyses the reaction 2-deoxy-D-ribose 5-phosphate = D-glyceraldehyde 3-phosphate + acetaldehyde. The protein operates within carbohydrate degradation; 2-deoxy-D-ribose 1-phosphate degradation; D-glyceraldehyde 3-phosphate and acetaldehyde from 2-deoxy-alpha-D-ribose 1-phosphate: step 2/2. In terms of biological role, catalyzes a reversible aldol reaction between acetaldehyde and D-glyceraldehyde 3-phosphate to generate 2-deoxy-D-ribose 5-phosphate. The sequence is that of Deoxyribose-phosphate aldolase from Kocuria rhizophila (strain ATCC 9341 / DSM 348 / NBRC 103217 / DC2201).